Here is an 89-residue protein sequence, read N- to C-terminus: uncharacterized protein (89 aa).

The protein to M.tuberculosis Rv3402c.

This is an uncharacterized protein from Mycobacterium tuberculosis (strain CDC 1551 / Oshkosh).